Here is a 457-residue protein sequence, read N- to C-terminus: DNA repair protein RadA (457 aa).

The C4-type zinc finger occupies 10 to 27 (CQECGYESAKWMGKCPGC). 97–104 (GDPGIGKS) is an ATP binding site. The RadA KNRFG motif motif lies at 254 to 258 (KNRFG). Positions 353–457 (DAYVNVAGGV…QDALEVTLGR (105 aa)) are lon-protease-like.

Belongs to the RecA family. RadA subfamily.

Functionally, DNA-dependent ATPase involved in processing of recombination intermediates, plays a role in repairing DNA breaks. Stimulates the branch migration of RecA-mediated strand transfer reactions, allowing the 3' invading strand to extend heteroduplex DNA faster. Binds ssDNA in the presence of ADP but not other nucleotides, has ATPase activity that is stimulated by ssDNA and various branched DNA structures, but inhibited by SSB. Does not have RecA's homology-searching function. The chain is DNA repair protein RadA from Halalkalibacterium halodurans (strain ATCC BAA-125 / DSM 18197 / FERM 7344 / JCM 9153 / C-125) (Bacillus halodurans).